We begin with the raw amino-acid sequence, 211 residues long: Small ribosomal subunit protein uS3 (211 aa).

The region spanning 16–85 is the KH type-2 domain; it reads IDEYFKTKLV…NPQIEVKQVE (70 aa).

It belongs to the universal ribosomal protein uS3 family. As to quaternary structure, part of the 30S ribosomal subunit.

Binds the lower part of the 30S subunit head. The sequence is that of Small ribosomal subunit protein uS3 from Methanococcus maripaludis (strain C5 / ATCC BAA-1333).